The sequence spans 562 residues: Formate--tetrahydrofolate ligase (562 aa).

Thr-71 to Ser-78 is a binding site for ATP.

Belongs to the formate--tetrahydrofolate ligase family.

It carries out the reaction (6S)-5,6,7,8-tetrahydrofolate + formate + ATP = (6R)-10-formyltetrahydrofolate + ADP + phosphate. It functions in the pathway one-carbon metabolism; tetrahydrofolate interconversion. The polypeptide is Formate--tetrahydrofolate ligase (Bacillus anthracis (strain A0248)).